We begin with the raw amino-acid sequence, 380 residues long: Glycerate kinase (380 aa).

The protein belongs to the glycerate kinase type-1 family.

The catalysed reaction is (R)-glycerate + ATP = (2R)-3-phosphoglycerate + ADP + H(+). In Halalkalibacterium halodurans (strain ATCC BAA-125 / DSM 18197 / FERM 7344 / JCM 9153 / C-125) (Bacillus halodurans), this protein is Glycerate kinase (glxK).